We begin with the raw amino-acid sequence, 382 residues long: Dual-specificity RNA methyltransferase RlmN (382 aa).

Catalysis depends on glutamate 95, which acts as the Proton acceptor. Residues 101-349 (EETRGTLCVS…TTVRKTRGDD (249 aa)) enclose the Radical SAM core domain. Cysteine 108 and cysteine 354 are disulfide-bonded. [4Fe-4S] cluster is bound by residues cysteine 115, cysteine 119, and cysteine 122. S-adenosyl-L-methionine-binding positions include 180–181 (GE), serine 212, 234–236 (SLH), and asparagine 311. The active-site S-methylcysteine intermediate is the cysteine 354.

The protein belongs to the radical SAM superfamily. RlmN family. The cofactor is [4Fe-4S] cluster.

The protein resides in the cytoplasm. It catalyses the reaction adenosine(2503) in 23S rRNA + 2 reduced [2Fe-2S]-[ferredoxin] + 2 S-adenosyl-L-methionine = 2-methyladenosine(2503) in 23S rRNA + 5'-deoxyadenosine + L-methionine + 2 oxidized [2Fe-2S]-[ferredoxin] + S-adenosyl-L-homocysteine. The enzyme catalyses adenosine(37) in tRNA + 2 reduced [2Fe-2S]-[ferredoxin] + 2 S-adenosyl-L-methionine = 2-methyladenosine(37) in tRNA + 5'-deoxyadenosine + L-methionine + 2 oxidized [2Fe-2S]-[ferredoxin] + S-adenosyl-L-homocysteine. Functionally, specifically methylates position 2 of adenine 2503 in 23S rRNA and position 2 of adenine 37 in tRNAs. m2A2503 modification seems to play a crucial role in the proofreading step occurring at the peptidyl transferase center and thus would serve to optimize ribosomal fidelity. This is Dual-specificity RNA methyltransferase RlmN from Paraburkholderia phymatum (strain DSM 17167 / CIP 108236 / LMG 21445 / STM815) (Burkholderia phymatum).